The sequence spans 66 residues: Large ribosomal subunit protein bL35 (66 aa).

This sequence belongs to the bacterial ribosomal protein bL35 family.

This Cereibacter sphaeroides (strain ATCC 17029 / ATH 2.4.9) (Rhodobacter sphaeroides) protein is Large ribosomal subunit protein bL35.